A 480-amino-acid chain; its full sequence is Bifunctional protein GlmU (480 aa).

The segment at Met-1 to Pro-247 is pyrophosphorylase. Residues Lys-24, Gln-86, Gly-91–Thr-92, Ser-113–Asp-115, Gly-150, Glu-172, and Asn-245 each bind UDP-N-acetyl-alpha-D-glucosamine. Residue Asp-115 coordinates Mg(2+). Asn-245 lines the Mg(2+) pocket. Residues Val-248–Gln-268 form a linker region. The interval Gly-269–Gly-480 is N-acetyltransferase. 2 residues coordinate UDP-N-acetyl-alpha-D-glucosamine: Arg-355 and Lys-373. The Proton acceptor role is filled by His-385. UDP-N-acetyl-alpha-D-glucosamine-binding residues include Tyr-388 and Asn-399. Acetyl-CoA-binding positions include Ala-402, Asn-408 to Tyr-409, Ser-427, Gly-445, and Arg-462.

In the N-terminal section; belongs to the N-acetylglucosamine-1-phosphate uridyltransferase family. The protein in the C-terminal section; belongs to the transferase hexapeptide repeat family. In terms of assembly, homotrimer. It depends on Mg(2+) as a cofactor.

It localises to the cytoplasm. The enzyme catalyses alpha-D-glucosamine 1-phosphate + acetyl-CoA = N-acetyl-alpha-D-glucosamine 1-phosphate + CoA + H(+). It catalyses the reaction N-acetyl-alpha-D-glucosamine 1-phosphate + UTP + H(+) = UDP-N-acetyl-alpha-D-glucosamine + diphosphate. It participates in nucleotide-sugar biosynthesis; UDP-N-acetyl-alpha-D-glucosamine biosynthesis; N-acetyl-alpha-D-glucosamine 1-phosphate from alpha-D-glucosamine 6-phosphate (route II): step 2/2. The protein operates within nucleotide-sugar biosynthesis; UDP-N-acetyl-alpha-D-glucosamine biosynthesis; UDP-N-acetyl-alpha-D-glucosamine from N-acetyl-alpha-D-glucosamine 1-phosphate: step 1/1. Its pathway is bacterial outer membrane biogenesis; LPS lipid A biosynthesis. Catalyzes the last two sequential reactions in the de novo biosynthetic pathway for UDP-N-acetylglucosamine (UDP-GlcNAc). The C-terminal domain catalyzes the transfer of acetyl group from acetyl coenzyme A to glucosamine-1-phosphate (GlcN-1-P) to produce N-acetylglucosamine-1-phosphate (GlcNAc-1-P), which is converted into UDP-GlcNAc by the transfer of uridine 5-monophosphate (from uridine 5-triphosphate), a reaction catalyzed by the N-terminal domain. This is Bifunctional protein GlmU from Polaromonas sp. (strain JS666 / ATCC BAA-500).